The following is a 481-amino-acid chain: 3-isopropylmalate dehydratase large subunit (481 aa).

[4Fe-4S] cluster-binding residues include cysteine 355, cysteine 415, and cysteine 418.

The protein belongs to the aconitase/IPM isomerase family. LeuC type 1 subfamily. As to quaternary structure, heterodimer of LeuC and LeuD. [4Fe-4S] cluster is required as a cofactor.

The enzyme catalyses (2R,3S)-3-isopropylmalate = (2S)-2-isopropylmalate. The protein operates within amino-acid biosynthesis; L-leucine biosynthesis; L-leucine from 3-methyl-2-oxobutanoate: step 2/4. Its function is as follows. Catalyzes the isomerization between 2-isopropylmalate and 3-isopropylmalate, via the formation of 2-isopropylmaleate. This is 3-isopropylmalate dehydratase large subunit from Symbiobacterium thermophilum (strain DSM 24528 / JCM 14929 / IAM 14863 / T).